Reading from the N-terminus, the 383-residue chain is Probable cell wall hydrolase LytN (383 aa).

The first 49 residues, 1–49 (MFIYYCKECSIMNKQQSKVRYSIRKVSIGILSISIGMFLALGMSNKAYA), serve as a signal peptide directing secretion. Residues 175 to 219 (QIYTVKKGDTLSAIALKYKTTVSNIQNTNNIANPNLIFIGQKLKV) form the LysM domain. The region spanning 241 to 378 (NSSTLNYLKT…NYENDMIFIR (138 aa)) is the Peptidase C51 domain.

It is found in the secreted. Functionally, probably involved in peptidoglycan hydrolysis. The protein is Probable cell wall hydrolase LytN (lytN) of Staphylococcus aureus (strain Mu50 / ATCC 700699).